Consider the following 63-residue polypeptide: Bowman-birk type proteinase inhibitor (63 aa).

Disulfide bonds link cysteine 7–cysteine 61, cysteine 8–cysteine 23, cysteine 11–cysteine 57, cysteine 13–cysteine 21, cysteine 31–cysteine 38, cysteine 35–cysteine 50, and cysteine 40–cysteine 48.

Inhibits trypsin, chymotrypsin, plasmin and factor XIIa. Does not inhibit factor Xa, thrombin and plasma kallikrein. This Amburana acreana (Cerejeira) protein is Bowman-birk type proteinase inhibitor.